A 1250-amino-acid chain; its full sequence is DNA-directed RNA polymerase subunit beta'' (1250 aa).

The Zn(2+) site is built by Cys224, Cys314, Cys321, and Cys324.

This sequence belongs to the RNA polymerase beta' chain family. RpoC2 subfamily. As to quaternary structure, in plastids the minimal PEP RNA polymerase catalytic core is composed of four subunits: alpha, beta, beta', and beta''. When a (nuclear-encoded) sigma factor is associated with the core the holoenzyme is formed, which can initiate transcription. The cofactor is Zn(2+).

The protein localises to the plastid. It is found in the chloroplast. The catalysed reaction is RNA(n) + a ribonucleoside 5'-triphosphate = RNA(n+1) + diphosphate. DNA-dependent RNA polymerase catalyzes the transcription of DNA into RNA using the four ribonucleoside triphosphates as substrates. The polypeptide is DNA-directed RNA polymerase subunit beta'' (Staurastrum punctulatum (Green alga)).